The sequence spans 766 residues: BMP/retinoic acid-inducible neural-specific protein 3 (766 aa).

Positions 1–33 are cleaved as a signal peptide; the sequence is MIWRSRAGAELFSLMALWEWIALSLHCWVLAVA. One can recognise an MACPF domain in the interval 74 to 264; sequence RYKIYREFGR…FVQAALSYIA (191 aa). 6 N-linked (GlcNAc...) asparagine glycosylation sites follow: N168, N337, N456, N562, N609, and N641.

Belongs to the BRINP family. In terms of tissue distribution, strongly expressed in oral keratinocytes compared to the weak expression in tongue squamous cell carcinoma (SCC). Expressed in endothelial and aortic smooth muscle cells. Overexpressed in gonadotropinomas compared to normal pituitarie tissues.

It localises to the secreted. It is found in the mitochondrion. Its function is as follows. Inhibits neuronal cell proliferation by negative regulation of the cell cycle transition. Promotes pituitary gonadotrope cell proliferation, migration and invasion, when overexpressed. May play a role in cell pituitary tumor development. The sequence is that of BMP/retinoic acid-inducible neural-specific protein 3 (BRINP3) from Homo sapiens (Human).